The chain runs to 348 residues: Dihydroorotase (348 aa).

Positions 14 and 16 each coordinate Zn(2+). Substrate contacts are provided by residues 16–18 (HLR) and Asn-42. 3 residues coordinate Zn(2+): Lys-100, His-137, and His-175. At Lys-100 the chain carries N6-carboxylysine. His-137 contributes to the substrate binding site. Residue Leu-220 participates in substrate binding. Asp-248 lines the Zn(2+) pocket. The active site involves Asp-248. Residues His-252 and Ala-264 each coordinate substrate.

This sequence belongs to the metallo-dependent hydrolases superfamily. DHOase family. Class II DHOase subfamily. In terms of assembly, homodimer. The cofactor is Zn(2+).

It catalyses the reaction (S)-dihydroorotate + H2O = N-carbamoyl-L-aspartate + H(+). The protein operates within pyrimidine metabolism; UMP biosynthesis via de novo pathway; (S)-dihydroorotate from bicarbonate: step 3/3. Catalyzes the reversible cyclization of carbamoyl aspartate to dihydroorotate. This chain is Dihydroorotase, found in Pseudomonas putida (strain ATCC 700007 / DSM 6899 / JCM 31910 / BCRC 17059 / LMG 24140 / F1).